A 187-amino-acid chain; its full sequence is MISSNDFRTGTTIELDGAVWRVVEFLHVKPGKGSAFVRTKLKAVQSGNVVEKTFRAGEMLPQAILEKATLQHTYMEGEDYVFMDMGTYEETRLSAKQIGESRKYLKEGMEVNVVSWNDKPLEVELPNSVVLEIKETDPGVKGDTATGGTKPAILETGAQVMVPLFLSIGEKIKVDTRNDTYLGRENS.

It belongs to the elongation factor P family.

It localises to the cytoplasm. It functions in the pathway protein biosynthesis; polypeptide chain elongation. In terms of biological role, involved in peptide bond synthesis. Stimulates efficient translation and peptide-bond synthesis on native or reconstituted 70S ribosomes in vitro. Probably functions indirectly by altering the affinity of the ribosome for aminoacyl-tRNA, thus increasing their reactivity as acceptors for peptidyl transferase. This chain is Elongation factor P, found in Synechococcus sp. (strain WH7803).